We begin with the raw amino-acid sequence, 506 residues long: Galactose/methyl galactoside import ATP-binding protein MglA (506 aa).

2 ABC transporter domains span residues 14–249 (LEMK…VGRS) and 264–506 (VMLE…SLYL). 46-53 (GENGAGKS) is an ATP binding site.

The protein belongs to the ABC transporter superfamily. Galactose/methyl galactoside importer (TC 3.A.1.2.3) family. In terms of assembly, the complex is composed of one ATP-binding protein (MglA), two transmembrane proteins (MglC) and a solute-binding protein (MglB).

It localises to the cell inner membrane. The enzyme catalyses D-galactose(out) + ATP + H2O = D-galactose(in) + ADP + phosphate + H(+). It carries out the reaction methyl beta-D-galactoside(out) + ATP + H2O = methyl beta-D-galactoside(in) + ADP + phosphate + H(+). Part of the ABC transporter complex MglABC involved in galactose/methyl galactoside import. Responsible for energy coupling to the transport system. The polypeptide is Galactose/methyl galactoside import ATP-binding protein MglA (Sodalis glossinidius (strain morsitans)).